The following is a 367-amino-acid chain: MTPDILPTDGYEHQLAEKSARLQAMMSPFQAPAAEIFRSPAEHYRMRAEFRVWHDEDDLYHIMFDQQTKLRIRVEQFPVASLLINRLMSALMTAIRAEPILRHKLFQIDYLSTLSGKLLATLLYHRPLDEEWQQKARELRDQLREQGFDLQLIGRASKTKIMLDHDYIDEVLPVAGRDMIYRQVENSFTQPNAAVNIHMLEWAIDVTQHASGDLLELYCGNGNFSLALARNFDRVLATEIAKPSVAAAQYNIAANHIDNVQIIRMSAEEFTQAMQGVREFNRLKGIDLTSYNCETIFVDPPRSGLDDETVKLVQAYPRILYISCNPETLCANLEQLQYTHKISRLALFDQFPYTHHMECGVLLEKRD.

Gln190, Tyr218, Asn223, Glu239, and Asp299 together coordinate S-adenosyl-L-methionine. The Nucleophile role is filled by Cys324. The active-site Proton acceptor is Glu358.

This sequence belongs to the class I-like SAM-binding methyltransferase superfamily. RNA M5U methyltransferase family. TrmA subfamily.

The catalysed reaction is uridine(54) in tRNA + S-adenosyl-L-methionine = 5-methyluridine(54) in tRNA + S-adenosyl-L-homocysteine + H(+). It carries out the reaction uridine(341) in tmRNA + S-adenosyl-L-methionine = 5-methyluridine(341) in tmRNA + S-adenosyl-L-homocysteine + H(+). Dual-specificity methyltransferase that catalyzes the formation of 5-methyluridine at position 54 (m5U54) in all tRNAs, and that of position 341 (m5U341) in tmRNA (transfer-mRNA). This is tRNA/tmRNA (uracil-C(5))-methyltransferase from Yersinia enterocolitica serotype O:8 / biotype 1B (strain NCTC 13174 / 8081).